The primary structure comprises 211 residues: Troponin I, cardiac muscle (211 aa).

The segment at 1–24 is disordered; that stretch reads MADESSDAAGEPQPAPAPVRRRSS. The residue at position 2 (Ala2) is an N-acetylalanine. Ser5 and Ser6 each carry phosphoserine. A phosphoserine; by PKA and PKD/PRKD1 mark is found at Ser23 and Ser24. Residue Tyr27 is modified to Phosphotyrosine. Position 32 is a phosphothreonine; by STK4/MST1 (Thr32). Positions 33–80 are involved in binding TNC; the sequence is EPHAKKKSKISASRKLQLKTLMLQIAKQEMEREAEERRGEKGRVLRTR. Phosphoserine; by PKC/PRKCE occurs at positions 43 and 45. Thr52 is modified (phosphothreonine; by STK4/MST1). The residue at position 79 (Thr79) is a Phosphothreonine. Phosphothreonine; by STK4/MST1 is present on residues Thr130 and Thr144. Positions 130–151 are involved in binding TNC and actin; that stretch reads TQKIYDLRGKFKRPTLRRVRIS. 3 positions are modified to phosphoserine: Ser151, Ser167, and Ser200.

This sequence belongs to the troponin I family. Interacts with TRIM63. Binds to actin and tropomyosin. Interacts with STK4/MST1. In terms of processing, phosphorylated at Ser-23 and Ser-24 by PRKD1; phosphorylation reduces myofilament calcium sensitivity. Phosphorylated preferentially at Thr-32. Phosphorylation by STK4/MST1 alters its binding affinity to TNNC1 (cardiac Tn-C) and TNNT2 (cardiac Tn-T). Phosphorylated at Ser-43 and Ser-45 by PRKCE; phosphorylation increases myocardium contractile dysfunction.

In terms of biological role, troponin I is the inhibitory subunit of troponin, the thin filament regulatory complex which confers calcium-sensitivity to striated muscle actomyosin ATPase activity. The sequence is that of Troponin I, cardiac muscle (Tnni3) from Mus musculus (Mouse).